Consider the following 407-residue polypeptide: Argininosuccinate synthase (407 aa).

ATP-binding positions include 16 to 24 (AYSGGLDTS) and A44. Positions 96 and 101 each coordinate L-citrulline. Residue G126 coordinates ATP. L-aspartate is bound by residues T128, N132, and D133. N132 lines the L-citrulline pocket. Positions 136, 185, 194, 270, and 282 each coordinate L-citrulline.

It belongs to the argininosuccinate synthase family. Type 1 subfamily. Homotetramer.

It is found in the cytoplasm. The catalysed reaction is L-citrulline + L-aspartate + ATP = 2-(N(omega)-L-arginino)succinate + AMP + diphosphate + H(+). It functions in the pathway amino-acid biosynthesis; L-arginine biosynthesis; L-arginine from L-ornithine and carbamoyl phosphate: step 2/3. The chain is Argininosuccinate synthase from Shewanella loihica (strain ATCC BAA-1088 / PV-4).